A 314-amino-acid chain; its full sequence is Putative S-adenosyl-L-methionine-dependent methyltransferase MAP_0256 (314 aa).

Residues D132 and 161–162 (DL) each bind S-adenosyl-L-methionine.

It belongs to the UPF0677 family.

Functionally, exhibits S-adenosyl-L-methionine-dependent methyltransferase activity. The sequence is that of Putative S-adenosyl-L-methionine-dependent methyltransferase MAP_0256 from Mycolicibacterium paratuberculosis (strain ATCC BAA-968 / K-10) (Mycobacterium paratuberculosis).